We begin with the raw amino-acid sequence, 130 residues long: Endoglucanase 2 (130 aa).

Residues His-47, Asp-98, and Glu-107 contribute to the active site.

The protein belongs to the glycosyl hydrolase 9 (cellulase E) family.

The enzyme catalyses Endohydrolysis of (1-&gt;4)-beta-D-glucosidic linkages in cellulose, lichenin and cereal beta-D-glucans.. Functionally, involved in ripening fruit process. This chain is Endoglucanase 2 (CEL2), found in Persea americana (Avocado).